The chain runs to 260 residues: Proteasome subunit alpha (260 aa).

Residues 241–260 (VEAEEVPEKEEDYSELDSNY) form a disordered region. Residues 242–260 (EAEEVPEKEEDYSELDSNY) are compositionally biased toward acidic residues.

This sequence belongs to the peptidase T1A family. The 20S proteasome core is composed of 14 alpha and 14 beta subunits that assemble into four stacked heptameric rings, resulting in a barrel-shaped structure. The two inner rings, each composed of seven catalytic beta subunits, are sandwiched by two outer rings, each composed of seven alpha subunits. The catalytic chamber with the active sites is on the inside of the barrel. Has a gated structure, the ends of the cylinder being occluded by the N-termini of the alpha-subunits. Is capped at one or both ends by the proteasome regulatory ATPase, PAN.

It is found in the cytoplasm. Its activity is regulated as follows. The formation of the proteasomal ATPase PAN-20S proteasome complex, via the docking of the C-termini of PAN into the intersubunit pockets in the alpha-rings, triggers opening of the gate for substrate entry. Interconversion between the open-gate and close-gate conformations leads to a dynamic regulation of the 20S proteasome proteolysis activity. Component of the proteasome core, a large protease complex with broad specificity involved in protein degradation. This chain is Proteasome subunit alpha, found in Thermococcus sibiricus (strain DSM 12597 / MM 739).